An 869-amino-acid chain; its full sequence is Dimethylglycine dehydrogenase, mitochondrial (869 aa).

The N-terminal 43 residues, 1–43, are a transit peptide targeting the mitochondrion; that stretch reads MLRPGALRLRGLALRGSPRRPSSAGLREGQESPASPPEWKDRA. Residues 14 to 39 form a disordered region; it reads LRGSPRRPSSAGLREGQESPASPPEW. Residues 52–53, 73–74, and 80–88 each bind FAD; these read CV, EK, and GSTWHAAGL. Position 84 is a tele-8alpha-FAD histidine (His-84). Lys-107 is subject to N6-acetyllysine. An N6-acetyllysine; alternate modification is found at Lys-141. Residue Lys-141 is modified to N6-succinyllysine; alternate. Residue Lys-161 is modified to N6-acetyllysine. Val-212 contributes to the FAD binding site. An N6-acetyllysine modification is found at Lys-216. An FAD-binding site is contributed by Trp-244. Lys-310 and Lys-312 each carry N6-succinyllysine. N6-acetyllysine is present on residues Lys-328 and Lys-353. 390–395 is a binding site for FAD; sequence FGYGII. Lys-427, Lys-469, and Lys-516 each carry N6-acetyllysine; alternate. An N6-succinyllysine; alternate mark is found at Lys-427, Lys-469, and Lys-516. 573 to 575 contacts (6S)-5,6,7,8-tetrahydrofolate; that stretch reads ELT. Lys-648 is subject to N6-acetyllysine; alternate. Lys-648 bears the N6-succinyllysine; alternate mark. (6S)-5,6,7,8-tetrahydrofolate-binding positions include Tyr-669, 676–678, and Tyr-737; that span reads ELY. Lys-757 is modified (N6-acetyllysine). Lys-786 carries the post-translational modification N6-acetyllysine; alternate. Position 786 is an N6-succinyllysine; alternate (Lys-786). Residue Lys-788 is modified to N6-succinyllysine.

This sequence belongs to the GcvT family. Requires FAD as cofactor.

The protein localises to the mitochondrion. It catalyses the reaction (6S)-5,6,7,8-tetrahydrofolyl-(gamma-L-Glu)(n) + N,N-dimethylglycine + oxidized [electron-transfer flavoprotein] + H(+) = (6R)-5,10-methylenetetrahydrofolyl-(gamma-L-Glu)(n) + sarcosine + reduced [electron-transfer flavoprotein]. Its pathway is amine and polyamine degradation; betaine degradation; sarcosine from betaine: step 2/2. Catalyzes the demethylation of N,N-dimethylglycine to sarcosine. Also has activity with sarcosine in vitro. This is Dimethylglycine dehydrogenase, mitochondrial (Dmgdh) from Mus musculus (Mouse).